A 955-amino-acid chain; its full sequence is Anion exchange protein 4 (955 aa).

3 disordered regions span residues 20-50, 154-190, and 331-352; these read VGQLDSGPSSGPCPDDPSDTGSRELGPPEDP, HTQTTGSRPCWGPAQSRKAAHNKEAPMQQQCQSPLRQ, and PHRTQAEDRHRNGPLAPSPELQ. Helical transmembrane passes span 387–407, 415–435, 472–492, and 503–523; these read AVLYIYLATVTNAITFGGLLG, GVLESLLGTAVAGAAFCLMAG, VGIWVAVFCLALVATEASVLV, and FCALISLIFIYDAVGKMLNLA. Residues 387-955 form a membrane (anion exchange) region; sequence AVLYIYLATV…KAPEINISVN (569 aa). Residues Asn548 and Asn572 are each glycosylated (N-linked (GlcNAc...) asparagine). 7 helical membrane passes run 596-616, 637-657, 684-704, 730-750, 785-804, 811-830, and 871-891; these read VPDIAFFSLLLFLTSFLFAIA, FSSILAILLGCGLDALLGLAM, PWWLSVAAALPALLLSILIFM, LFCVALLMLLTSVLGLPWYVS, LTGLAVFTLTGVSIFLAPVL, VLYGIFLYMGVAALSSIQFM, and LWIIKSTPAAIIFPLMLLGLV. Residues 918–955 are disordered; that stretch reads RNVPEKGLEPGHSFSGSDSEDSELMYQPKAPEINISVN. The N-linked (GlcNAc...) asparagine glycan is linked to Asn951.

Belongs to the anion exchanger (TC 2.A.31) family. Highly expressed in kidney. Expressed in the outer medulla and the inner medulla in the kidney cortex. Only expressed in beta-intercalated cells.

It localises to the lateral cell membrane. The protein resides in the apical cell membrane. It is found in the basolateral cell membrane. The enzyme catalyses 2 hydrogencarbonate(out) + chloride(in) + Na(+)(out) = 2 hydrogencarbonate(in) + chloride(out) + Na(+)(in). It carries out the reaction K(+)(in) + 2 hydrogencarbonate(in) + chloride(out) = K(+)(out) + 2 hydrogencarbonate(out) + chloride(in). The catalysed reaction is Li(+)(in) + 2 hydrogencarbonate(in) + chloride(out) = Li(+)(out) + 2 hydrogencarbonate(out) + chloride(in). It catalyses the reaction Rb(+)(in) + 2 hydrogencarbonate(in) + chloride(out) = Rb(+)(out) + 2 hydrogencarbonate(out) + chloride(in). The enzyme catalyses Cs(+)(in) + 2 hydrogencarbonate(in) + chloride(out) = Cs(+)(out) + 2 hydrogencarbonate(out) + chloride(in). Electroneutral Cl(-)/HCO3(-) antiporter that favors chloride ion entry and efflux of hydrogencarbonate and sodium ion across the basolateral membrane and may participat in salivary secretion. Also mediates Cl(-)/HCO3(-) exchange activity in the presence of K(+) as well as Cs(+), Li(+), and Rb(+). Does not contribute to Cl(-)/HCO3(-) exchanger in the apical membrane of the upper villous epithelium. The polypeptide is Anion exchange protein 4 (Oryctolagus cuniculus (Rabbit)).